Consider the following 203-residue polypeptide: Peptide deformylase (203 aa).

The Fe cation site is built by Cys130 and His173. Glu174 is an active-site residue. Residue His177 coordinates Fe cation.

Belongs to the polypeptide deformylase family. Fe(2+) is required as a cofactor.

The catalysed reaction is N-terminal N-formyl-L-methionyl-[peptide] + H2O = N-terminal L-methionyl-[peptide] + formate. In terms of biological role, removes the formyl group from the N-terminal Met of newly synthesized proteins. Requires at least a dipeptide for an efficient rate of reaction. N-terminal L-methionine is a prerequisite for activity but the enzyme has broad specificity at other positions. The sequence is that of Peptide deformylase from Streptococcus pneumoniae serotype 2 (strain D39 / NCTC 7466).